Reading from the N-terminus, the 162-residue chain is Protein A49 (162 aa).

The protein belongs to the poxviridae A49 protein family.

This Homo sapiens (Human) protein is Protein A49.